The following is a 354-amino-acid chain: UDP-3-O-acylglucosamine N-acyltransferase (354 aa).

Residue His245 is the Proton acceptor of the active site.

The protein belongs to the transferase hexapeptide repeat family. LpxD subfamily. In terms of assembly, homotrimer.

The catalysed reaction is a UDP-3-O-[(3R)-3-hydroxyacyl]-alpha-D-glucosamine + a (3R)-hydroxyacyl-[ACP] = a UDP-2-N,3-O-bis[(3R)-3-hydroxyacyl]-alpha-D-glucosamine + holo-[ACP] + H(+). It functions in the pathway bacterial outer membrane biogenesis; LPS lipid A biosynthesis. In terms of biological role, catalyzes the N-acylation of UDP-3-O-acylglucosamine using 3-hydroxyacyl-ACP as the acyl donor. Is involved in the biosynthesis of lipid A, a phosphorylated glycolipid that anchors the lipopolysaccharide to the outer membrane of the cell. This Anaeromyxobacter sp. (strain K) protein is UDP-3-O-acylglucosamine N-acyltransferase.